The sequence spans 149 residues: Large ribosomal subunit protein bL9 (149 aa).

The protein belongs to the bacterial ribosomal protein bL9 family.

Functionally, binds to the 23S rRNA. This chain is Large ribosomal subunit protein bL9, found in Bacillus licheniformis (strain ATCC 14580 / DSM 13 / JCM 2505 / CCUG 7422 / NBRC 12200 / NCIMB 9375 / NCTC 10341 / NRRL NRS-1264 / Gibson 46).